A 236-amino-acid polypeptide reads, in one-letter code: C-&gt;U-editing enzyme APOBEC-1 (236 aa).

Positions Lys10–Leu134 constitute a CMP/dCMP-type deaminase domain. His61 contributes to the Zn(2+) binding site. The active-site Proton donor is Glu63. Zn(2+)-binding residues include Cys93 and Cys96.

The protein belongs to the cytidine and deoxycytidylate deaminase family. Homodimer. Interacts with A1CF; form an mRNA editing complex. Interacts with RBM47; form an mRNA editing complex. Found in a complex with CELF2/CUGBP2 and A1CF. Interacts with HNRPAB. Interacts with SYNCRIP. Zn(2+) is required as a cofactor. In terms of tissue distribution, expressed exclusively in the intestine.

It localises to the cytoplasm. The protein localises to the nucleus. It catalyses the reaction a cytidine in mRNA + H2O + H(+) = a uridine in mRNA + NH4(+). The catalysed reaction is cytidine(6666) in apoB mRNA + H2O + H(+) = uridine(6666) in apoB mRNA + NH4(+). In terms of biological role, cytidine deaminase catalyzing the cytidine to uridine postranscriptional editing of a variety of mRNAs. Form complexes with cofactors that confer differential editing activity and selectivity. Responsible for the postranscriptional editing of a CAA codon for Gln to a UAA codon for stop in the apolipoprotein B mRNA. Also involved in CGA (Arg) to UGA (Stop) editing in the NF1 mRNA. May also play a role in the epigenetic regulation of gene expression by participating in DNA demethylation. The sequence is that of C-&gt;U-editing enzyme APOBEC-1 from Oryctolagus cuniculus (Rabbit).